We begin with the raw amino-acid sequence, 370 residues long: Alanine racemase (370 aa).

The Proton acceptor; specific for D-alanine role is filled by Lys39. An N6-(pyridoxal phosphate)lysine modification is found at Lys39. Arg137 contacts substrate. Tyr258 serves as the catalytic Proton acceptor; specific for L-alanine. Substrate is bound at residue Met306.

It belongs to the alanine racemase family. Pyridoxal 5'-phosphate is required as a cofactor.

The catalysed reaction is L-alanine = D-alanine. It functions in the pathway amino-acid biosynthesis; D-alanine biosynthesis; D-alanine from L-alanine: step 1/1. Functionally, catalyzes the interconversion of L-alanine and D-alanine. May also act on other amino acids. The sequence is that of Alanine racemase (alr) from Methylobacterium nodulans (strain LMG 21967 / CNCM I-2342 / ORS 2060).